The following is a 475-amino-acid chain: Ribulose bisphosphate carboxylase large chain (475 aa).

The propeptide occupies 1–2 (MS). Residue Pro3 is modified to N-acetylproline. Residue Lys14 is modified to N6,N6,N6-trimethyllysine. Residues Asn123 and Thr173 each coordinate substrate. The Proton acceptor role is filled by Lys175. Lys177 is a binding site for substrate. Mg(2+)-binding residues include Lys201, Asp203, and Glu204. Lys201 is subject to N6-carboxylysine. Catalysis depends on His294, which acts as the Proton acceptor. Substrate contacts are provided by Arg295, His327, and Ser379.

This sequence belongs to the RuBisCO large chain family. Type I subfamily. As to quaternary structure, heterohexadecamer of 8 large chains and 8 small chains; disulfide-linked. The disulfide link is formed within the large subunit homodimers. Mg(2+) is required as a cofactor. In terms of processing, the disulfide bond which can form in the large chain dimeric partners within the hexadecamer appears to be associated with oxidative stress and protein turnover.

The protein localises to the plastid. It localises to the chloroplast. The enzyme catalyses 2 (2R)-3-phosphoglycerate + 2 H(+) = D-ribulose 1,5-bisphosphate + CO2 + H2O. The catalysed reaction is D-ribulose 1,5-bisphosphate + O2 = 2-phosphoglycolate + (2R)-3-phosphoglycerate + 2 H(+). In terms of biological role, ruBisCO catalyzes two reactions: the carboxylation of D-ribulose 1,5-bisphosphate, the primary event in carbon dioxide fixation, as well as the oxidative fragmentation of the pentose substrate in the photorespiration process. Both reactions occur simultaneously and in competition at the same active site. The protein is Ribulose bisphosphate carboxylase large chain of Ostrya virginiana (American hophornbeam).